The chain runs to 100 residues: Small ribosomal subunit protein bS20 (100 aa).

A disordered region spans residues 79-100 (AAHQKSRLSAAVKQAIEPAPST).

The protein belongs to the bacterial ribosomal protein bS20 family.

Functionally, binds directly to 16S ribosomal RNA. The sequence is that of Small ribosomal subunit protein bS20 from Prochlorococcus marinus (strain MIT 9303).